A 92-amino-acid polypeptide reads, in one-letter code: Precursor of CEP12 (92 aa).

The first 30 residues, 1 to 30 (MVNRDNSIVALSFFMLFLLVLHLHFETTTA), serve as a signal peptide directing secretion. The propeptide occupies 31–70 (ARKPVRVFGPPSSIEWSPPSPPKDDFEWFEINIYKNIEQT). Positions 70–92 (TAFRPTGQGPSQGIGHKDPPGAP) are disordered. Residues Pro74 and Pro79 each carry the hydroxyproline modification. A propeptide spanning residues 86–92 (KDPPGAP) is cleaved from the precursor.

Belongs to the C-terminally encoded plant signaling peptide (CEP) family. In terms of assembly, interacts with CEP receptors (e.g. CEPR1 and CEPR2). The mature small signaling peptide is generated by proteolytic processing of the longer precursor.

It is found in the secreted. The protein localises to the extracellular space. It localises to the apoplast. Extracellular signaling peptide that may regulate primary root growth rate and systemic nitrogen (N)-demand signaling. This Arabidopsis thaliana (Mouse-ear cress) protein is Precursor of CEP12.